Here is a 424-residue protein sequence, read N- to C-terminus: UPF0229 protein ECA2349 (424 aa).

The disordered stretch occupies residues 53-111 (SIPNADINEPMFHQGRGGHRHRVHPGNDHFVQNDKIERPQGGGGSGSGQGDASKDGEGD). Residues 77-90 (PGNDHFVQNDKIER) show a composition bias toward basic and acidic residues. Gly residues predominate over residues 92-101 (QGGGGSGSGQ).

The protein belongs to the UPF0229 family.

The sequence is that of UPF0229 protein ECA2349 from Pectobacterium atrosepticum (strain SCRI 1043 / ATCC BAA-672) (Erwinia carotovora subsp. atroseptica).